Consider the following 668-residue polypeptide: MKHYSIQPANLEFNAEGTPVSRDFDDVYFSNDNGLEETRYVFLGGNQLEARFPEYPHPLFVVAESGFGTGLNFLTLWQAFDQFREAHPQAQLQRLHFISFEKFPLTRSDLVLAHQHWPELAPWAEQLQAQWPMPLPGCHRLLLDEGRVTLDLWFGDINELTSQLDDSLNQKVDAWFLDGFAPAKNPDMWTQNLFNAMARLARPSGTLATFTSAGFVRRGLQDAGFTMQKRKGFGRKREMLCGVMEQTLPLPCSTPWFNRTGSSKREVAIIGGGIASALLSLALLRRSWQVTLYCADEAPALGASGNRQGALYPLLSKHDEALNRFFSNAFTFARRFYDQLPVKFDHDWCGVTQLGWDEKSQHKIAQMLSMDLPEELAVAVEANAVEQITGVATNCSGITYPQGGWLCPAELTRNVLELAQQQGLQIYYQYQLQDLSRKDDCWLLNFAEDQQATHSVVVLANGHQISRFSQTSSLPVYSVAGQVSHIPTTPELAKLKQVLCYDGYLTPQNPANQHHCIGASYHRGSEDTAYSDEDQQQNRQRLIDCFPQAQWAKEVDISEKEARCGVRCATRDHLPMVGNVPDYEATLVEYASLAEQKDKAVSAPVYDDLFMLDALGSRGLCSAPLCAEILAAQMSEEPIPMDASTLAALNPNRLWVRKLLKGKAVKAG.

A tRNA (mnm(5)s(2)U34)-methyltransferase region spans residues 1-245 (MKHYSIQPAN…KREMLCGVME (245 aa)). The tract at residues 270–668 (IGGGIASALL…LLKGKAVKAG (399 aa)) is FAD-dependent cmnm(5)s(2)U34 oxidoreductase.

In the N-terminal section; belongs to the methyltransferase superfamily. tRNA (mnm(5)s(2)U34)-methyltransferase family. This sequence in the C-terminal section; belongs to the DAO family. FAD is required as a cofactor.

The protein resides in the cytoplasm. It carries out the reaction 5-aminomethyl-2-thiouridine(34) in tRNA + S-adenosyl-L-methionine = 5-methylaminomethyl-2-thiouridine(34) in tRNA + S-adenosyl-L-homocysteine + H(+). In terms of biological role, catalyzes the last two steps in the biosynthesis of 5-methylaminomethyl-2-thiouridine (mnm(5)s(2)U) at the wobble position (U34) in tRNA. Catalyzes the FAD-dependent demodification of cmnm(5)s(2)U34 to nm(5)s(2)U34, followed by the transfer of a methyl group from S-adenosyl-L-methionine to nm(5)s(2)U34, to form mnm(5)s(2)U34. This is tRNA 5-methylaminomethyl-2-thiouridine biosynthesis bifunctional protein MnmC from Shigella dysenteriae serotype 1 (strain Sd197).